The primary structure comprises 566 residues: OTU domain-containing protein 5 (566 aa).

2 disordered regions span residues 1–117 (MTIL…GDAL) and 146–175 (PGHSKRRRQAPGVGAVGGASPEREEVGAGY). Over residues 11 to 30 (PPDADPANEPPPPGPLPPAP) the composition is skewed to pro residues. The span at 32 to 47 (RGGGVGVGGGGTGVGG) shows a compositional bias: gly residues. Residues 63-75 (ASPPPQGPLPGPP) are compositionally biased toward pro residues. S64 is subject to Phosphoserine. The segment covering 84–97 (AVPPGAVAGPRPQQ) has biased composition (low complexity). Residues 105–115 (GPGGPGGGPGD) show a composition bias toward gly residues. S165 is subject to Phosphoserine. Position 175 is a phosphotyrosine (Y175). The residue at position 177 (S177) is a Phosphoserine. T195 is subject to Phosphothreonine. An OTU domain is found at 213–336 (FIIKQMKEDG…NIHYNSVVNP (124 aa)). The segment at 218-224 (MKEDGAC) is cys-loop. D221 is an active-site residue. C224 (nucleophile) is an active-site residue. The tract at residues 273–283 (KRKNNCHGNHI) is variable-loop. S323 carries the phosphoserine modification. A his-loop region spans residues 324–329 (YHRNIH). H329 is a catalytic residue. 2 positions are modified to phosphoserine: S332 and S370. The segment at 413–497 (ARQVRGPSQP…PGTSSQFSAG (85 aa)) is disordered. Composition is skewed to low complexity over residues 425–438 (ASATCSSATAAASS) and 445–457 (SRSPRQRSSASSP). The residue at position 447 (S447) is a Phosphoserine. T502 is subject to Phosphothreonine. A Phosphoserine modification is found at S503.

It belongs to the peptidase C85 family. Interacts with TRAF3. Phosphorylation at Ser-177 is required for deubiquitinating activity. Phosphorylation at Ser-323, Ser-332 and Ser-503 by MTOR promotes its activity.

It localises to the nucleus. The catalysed reaction is Thiol-dependent hydrolysis of ester, thioester, amide, peptide and isopeptide bonds formed by the C-terminal Gly of ubiquitin (a 76-residue protein attached to proteins as an intracellular targeting signal).. Inhibited by N-ethyl-maleimide (NEM). Deubiquitinating enzyme that functions as a negative regulator of the innate immune system. Has peptidase activity towards 'Lys-48'- and 'Lys-63'-linked polyubiquitin chains. Can also cleave 'Lys-11'-linked ubiquitin chains (in vitro). Acts via TRAF3 deubiquitination and subsequent suppression of type I interferon (IFN) production. Controls neuroectodermal differentiation through cleaving 'Lys-48'-linked ubiquitin chains to counteract degradation of select chromatin regulators such as ARID1A, HDAC2 and HCF1. Acts as a positive regulator of mTORC1 and mTORC2 signaling following phosphorylation by MTOR: acts by mediating deubiquitination of BTRC, leading to its stability. In Rattus norvegicus (Rat), this protein is OTU domain-containing protein 5.